A 203-amino-acid chain; its full sequence is Type III effector protein HopBF1 (203 aa).

The segment at 1 to 23 is disordered; it reads MFNVSNNVAPSRYQGPSSTSVTP. The ATP site is built by Ser40, Gln41, Lys42, Asp107, Ile109, and Asp114. The active site involves Asp155. Residue Gln157 participates in ATP binding.

The protein belongs to the HopBF1 family.

The protein resides in the secreted. It is found in the host cell. It carries out the reaction L-seryl-[protein] + ATP = O-phospho-L-seryl-[protein] + ADP + H(+). Functionally, effector protein that targets and inactivates the eukaryotic molecular chaperone HSP90 during infection. HopBF1 is recognized by HSP90 as a host client. As a result, HopBF1 phosphorylates HSP90, leading to the inactivation of the HSP90 ATPase activity and chaperone function. In vitro, can phosphorylate the recombinant yeast HSP82 (HSP90) and human HSP 90-beta on Ser-108. In Ewingella americana (strain ATCC 33852 / DSM 4580 / CCUG 14506 / JCM 5911 / LMG 7869 / NCTC 12157 / CDC 1468-78), this protein is Type III effector protein HopBF1.